Here is a 561-residue protein sequence, read N- to C-terminus: uncharacterized protein (561 aa).

2 consecutive transmembrane segments (helical) span residues 29–49 (FIFN…KKII) and 80–100 (FLFH…ASII).

Its subcellular location is the cell membrane. This is an uncharacterized protein from Mycoplasma genitalium (strain ATCC 33530 / DSM 19775 / NCTC 10195 / G37) (Mycoplasmoides genitalium).